The sequence spans 160 residues: Cyclic pyranopterin monophosphate synthase (160 aa).

Residues 77–79 (MCH) and 114–115 (ME) contribute to the substrate site. Asp129 is an active-site residue.

Belongs to the MoaC family. Homohexamer; trimer of dimers.

It catalyses the reaction (8S)-3',8-cyclo-7,8-dihydroguanosine 5'-triphosphate = cyclic pyranopterin phosphate + diphosphate. Its pathway is cofactor biosynthesis; molybdopterin biosynthesis. Catalyzes the conversion of (8S)-3',8-cyclo-7,8-dihydroguanosine 5'-triphosphate to cyclic pyranopterin monophosphate (cPMP). The sequence is that of Cyclic pyranopterin monophosphate synthase from Listeria monocytogenes serotype 4a (strain HCC23).